The following is a 99-amino-acid chain: Large ribosomal subunit protein bL21 (99 aa).

Belongs to the bacterial ribosomal protein bL21 family. As to quaternary structure, part of the 50S ribosomal subunit. Contacts protein L20.

Its function is as follows. This protein binds to 23S rRNA in the presence of protein L20. This chain is Large ribosomal subunit protein bL21, found in Anaplasma phagocytophilum (strain HZ).